A 98-amino-acid chain; its full sequence is NADH-ubiquinone oxidoreductase chain 4L (98 aa).

Transmembrane regions (helical) follow at residues 1–21, 28–48, and 59–79; these read MMPI…GALV, STLL…ALLI, and APLI…ALLV.

The protein belongs to the complex I subunit 4L family. In terms of assembly, core subunit of respiratory chain NADH dehydrogenase (Complex I) which is composed of 45 different subunits.

The protein localises to the mitochondrion inner membrane. The enzyme catalyses a ubiquinone + NADH + 5 H(+)(in) = a ubiquinol + NAD(+) + 4 H(+)(out). Core subunit of the mitochondrial membrane respiratory chain NADH dehydrogenase (Complex I) which catalyzes electron transfer from NADH through the respiratory chain, using ubiquinone as an electron acceptor. Part of the enzyme membrane arm which is embedded in the lipid bilayer and involved in proton translocation. The polypeptide is NADH-ubiquinone oxidoreductase chain 4L (MT-ND4L) (Distoechurus pennatus (Feather-tailed possum)).